The chain runs to 1148 residues: Maintenance of telomere capping protein 5 (1148 aa).

5 WD repeats span residues H63–I106, G112–Y152, S156–C195, G199–K239, and G299–V348. The RWD domain maps to E432–L543. At S759 the chain carries Phosphoserine. Positions T963–F990 are disordered. A compositionally biased stretch (polar residues) spans H964–F990.

It belongs to the WD repeat WDR59 family. As to quaternary structure, component of the SEA complex composed of at least IML1/SEA1, RTC1/SEA2, MTC5/SEA3, NPR2, NPR3, SEA4, SEC13 and SEH1.

The protein localises to the vacuole membrane. Component of the SEA complex which coats the vacuolar membrane and is involved in intracellular trafficking, autophagy, response to nitrogen starvation, and amino acid biogenesis. May be involved in telomere capping. The protein is Maintenance of telomere capping protein 5 (MTC5) of Saccharomyces cerevisiae (strain ATCC 204508 / S288c) (Baker's yeast).